The sequence spans 303 residues: Diaminopimelate epimerase (303 aa).

Substrate is bound by residues Asn-15, Gln-47, and Asn-67. Cys-76 functions as the Proton donor in the catalytic mechanism. Substrate is bound by residues 77 to 78 (GN), Asn-163, Asn-197, and 215 to 216 (ER). The active-site Proton acceptor is the Cys-224. Position 225-226 (225-226 (GS)) interacts with substrate. The tract at residues 278 to 303 (FDPATGEWSRDTQGLQGSGNADRGAA) is disordered.

This sequence belongs to the diaminopimelate epimerase family. As to quaternary structure, homodimer.

It localises to the cytoplasm. The catalysed reaction is (2S,6S)-2,6-diaminopimelate = meso-2,6-diaminopimelate. It participates in amino-acid biosynthesis; L-lysine biosynthesis via DAP pathway; DL-2,6-diaminopimelate from LL-2,6-diaminopimelate: step 1/1. In terms of biological role, catalyzes the stereoinversion of LL-2,6-diaminopimelate (L,L-DAP) to meso-diaminopimelate (meso-DAP), a precursor of L-lysine and an essential component of the bacterial peptidoglycan. The protein is Diaminopimelate epimerase of Brucella melitensis biotype 1 (strain ATCC 23456 / CCUG 17765 / NCTC 10094 / 16M).